The sequence spans 76 residues: Exodeoxyribonuclease 7 small subunit (76 aa).

This sequence belongs to the XseB family. In terms of assembly, heterooligomer composed of large and small subunits.

Its subcellular location is the cytoplasm. The catalysed reaction is Exonucleolytic cleavage in either 5'- to 3'- or 3'- to 5'-direction to yield nucleoside 5'-phosphates.. In terms of biological role, bidirectionally degrades single-stranded DNA into large acid-insoluble oligonucleotides, which are then degraded further into small acid-soluble oligonucleotides. The chain is Exodeoxyribonuclease 7 small subunit from Latilactobacillus sakei subsp. sakei (strain 23K) (Lactobacillus sakei subsp. sakei).